The chain runs to 55 residues: Conotoxin vc5b (55 aa).

Residues 1–15 (VILLLLIASAPSVDA) form the signal peptide. Residues 16 to 41 (QPKTKDDVPLAPLHDNAKSALQHLNQ) constitute a propeptide that is removed on maturation. Gln53 is modified (glutamine amide).

In terms of processing, contains 2 disulfide bonds that can be either 'C1-C3, C2-C4' or 'C1-C4, C2-C3', since these disulfide connectivities have been observed for conotoxins with cysteine framework V (for examples, see AC P0DQQ7 and AC P81755). As to expression, expressed by the venom duct.

It is found in the secreted. The polypeptide is Conotoxin vc5b (Conus victoriae (Queen Victoria cone)).